The chain runs to 400 residues: Phosphoglycerate kinase (400 aa).

Substrate-binding positions include 19–21 (DLN), R38, 61–64 (HLGR), R124, and R161. Residues K211, G299, E330, and 356 to 359 (GGDS) contribute to the ATP site.

The protein belongs to the phosphoglycerate kinase family. In terms of assembly, monomer.

The protein localises to the cytoplasm. It carries out the reaction (2R)-3-phosphoglycerate + ATP = (2R)-3-phospho-glyceroyl phosphate + ADP. It participates in carbohydrate degradation; glycolysis; pyruvate from D-glyceraldehyde 3-phosphate: step 2/5. The sequence is that of Phosphoglycerate kinase from Frankia alni (strain DSM 45986 / CECT 9034 / ACN14a).